The primary structure comprises 562 residues: Apical membrane antigen 1 (562 aa).

Positions 1 to 21 (MNKIYCILFLSAQCLVHMGKC) are cleaved as a signal peptide. Residues 22–484 (EPNQKPSRLT…QYAQGESKNQ (463 aa)) lie on the Extracellular side of the membrane. Residues Asn84 and Asn176 are each glycosylated (N-linked (GlcNAc...) asparagine). Cystine bridges form between Cys94–Cys247, Cys162–Cys192, Cys208–Cys220, Cys265–Cys363, Cys282–Cys354, Cys388–Cys444, Cys432–Cys449, and Cys434–Cys451. Asn226 carries an N-linked (GlcNAc...) asparagine glycan. N-linked (GlcNAc...) asparagine glycosylation is found at Asn405 and Asn441. A helical transmembrane segment spans residues 485-507 (MLLIIIGITGGVCVVALASMFYF). The Cytoplasmic portion of the chain corresponds to 508-562 (RKKAHNDKYDKMEQADGYGKPTTRKDEMLDPEASFWGEEKRASHTTPVLMEKPYY). The disordered stretch occupies residues 519–543 (MEQADGYGKPTTRKDEMLDPEASFW).

It belongs to the apicomplexan parasites AMA1 family.

Its subcellular location is the membrane. Functionally, involved in parasite invasion of erythrocytes. In Plasmodium fragile, this protein is Apical membrane antigen 1 (AMA-1).